Reading from the N-terminus, the 179-residue chain is tRNA (cytidine(56)-2'-O)-methyltransferase (179 aa).

Residues leucine 82, 112 to 116 (GAEKV), and 130 to 137 (VGNQPHSE) each bind S-adenosyl-L-methionine.

It belongs to the aTrm56 family. In terms of assembly, homodimer.

Its subcellular location is the cytoplasm. It catalyses the reaction cytidine(56) in tRNA + S-adenosyl-L-methionine = 2'-O-methylcytidine(56) in tRNA + S-adenosyl-L-homocysteine + H(+). In terms of biological role, specifically catalyzes the AdoMet-dependent 2'-O-ribose methylation of cytidine at position 56 in tRNAs. This is tRNA (cytidine(56)-2'-O)-methyltransferase from Methanococcus maripaludis (strain DSM 14266 / JCM 13030 / NBRC 101832 / S2 / LL).